Consider the following 675-residue polypeptide: UvrABC system protein B (675 aa).

A Helicase ATP-binding domain is found at 32 to 417 (EGLSDGLAYQ…EHAGQVVEQV (386 aa)). 45–52 (GVTGSGKT) is a binding site for ATP. Positions 98 to 121 (YYDYYQPEAYVPSRDLFIEKDSAI) match the Beta-hairpin motif. Residues 436-602 (QVDDLMSEIN…QIKKQVKDII (167 aa)) enclose the Helicase C-terminal domain. Residues 634 to 669 (IKEIAKLEKAMQQAARDLQFEEAAVLRDRIRNIKEN) form the UVR domain.

This sequence belongs to the UvrB family. As to quaternary structure, forms a heterotetramer with UvrA during the search for lesions. Interacts with UvrC in an incision complex.

Its subcellular location is the cytoplasm. The UvrABC repair system catalyzes the recognition and processing of DNA lesions. A damage recognition complex composed of 2 UvrA and 2 UvrB subunits scans DNA for abnormalities. Upon binding of the UvrA(2)B(2) complex to a putative damaged site, the DNA wraps around one UvrB monomer. DNA wrap is dependent on ATP binding by UvrB and probably causes local melting of the DNA helix, facilitating insertion of UvrB beta-hairpin between the DNA strands. Then UvrB probes one DNA strand for the presence of a lesion. If a lesion is found the UvrA subunits dissociate and the UvrB-DNA preincision complex is formed. This complex is subsequently bound by UvrC and the second UvrB is released. If no lesion is found, the DNA wraps around the other UvrB subunit that will check the other stand for damage. In Neisseria gonorrhoeae, this protein is UvrABC system protein B.